Here is a 93-residue protein sequence, read N- to C-terminus: Acylphosphatase (93 aa).

The Acylphosphatase-like domain occupies 6–93 (RARIVVSGRV…GDLGAFEIRF (88 aa)). Residues Arg21 and Asn39 contribute to the active site.

It belongs to the acylphosphatase family.

It catalyses the reaction an acyl phosphate + H2O = a carboxylate + phosphate + H(+). In Anaeromyxobacter dehalogenans (strain 2CP-C), this protein is Acylphosphatase (acyP).